Reading from the N-terminus, the 142-residue chain is VapC ribonuclease R02377 (142 aa).

The 138-residue stretch at 3–140 (FVDGSVIVAI…YKGNDFSQTD (138 aa)) folds into the PINc domain. Asp-5 and Asp-115 together coordinate Mg(2+).

It belongs to the PINc/VapC protein family. Mg(2+) is required as a cofactor.

Its function is as follows. Toxic component of a type II toxin-antitoxin (TA) system. An RNase. The chain is VapC ribonuclease R02377 from Rhizobium meliloti (strain 1021) (Ensifer meliloti).